The sequence spans 37 residues: Large ribosomal subunit protein bL36c (37 aa).

Belongs to the bacterial ribosomal protein bL36 family.

The protein resides in the plastid. Its subcellular location is the chloroplast. In Jasminum nudiflorum (Winter jasmine), this protein is Large ribosomal subunit protein bL36c.